Here is a 745-residue protein sequence, read N- to C-terminus: AP-3 complex subunit beta (745 aa).

Phosphoserine is present on Ser-638. Positions 674 to 745 (YASETSESSE…TEPEPNYWQS (72 aa)) are disordered. The span at 680-718 (ESSEGEYETSTSESEDEETDDTSQEEDNEKNSTPDEDTE) shows a compositional bias: acidic residues.

Belongs to the adaptor complexes large subunit family. Adaptor protein complex 3 (AP-3) is a heterotetramer composed of 2 large adaptins (apl5 and apl6), a medium adaptin (apm3) and a small adaptin (aps3).

Its subcellular location is the golgi apparatus. It localises to the cytoplasmic vesicle. It is found in the clathrin-coated vesicle membrane. In terms of biological role, adaptins are components of the adaptor complexes which link clathrin to receptors in coated vesicles. Clathrin-associated protein complexes are believed to interact with the cytoplasmic tails of membrane proteins, leading to their selection and concentration. Beta adaptin is a subunit of the plasma membrane adaptor. The polypeptide is AP-3 complex subunit beta (apl6) (Schizosaccharomyces pombe (strain 972 / ATCC 24843) (Fission yeast)).